The chain runs to 450 residues: Tubulin alpha-1 chain (450 aa).

Residues Gln-11, Glu-71, Gly-144, Thr-145, Thr-179, Asn-206, and Asn-228 each contribute to the GTP site. Glu-71 contributes to the Mg(2+) binding site. Glu-254 is a catalytic residue. Thr-349 is modified (phosphothreonine). The interval 431–450 (DYEEVGGEGAEDDDEEGDEY) is disordered.

Belongs to the tubulin family. In terms of assembly, dimer of alpha and beta chains. A typical microtubule is a hollow water-filled tube with an outer diameter of 25 nm and an inner diameter of 15 nM. Alpha-beta heterodimers associate head-to-tail to form protofilaments running lengthwise along the microtubule wall with the beta-tubulin subunit facing the microtubule plus end conferring a structural polarity. Microtubules usually have 13 protofilaments but different protofilament numbers can be found in some organisms and specialized cells. Requires Mg(2+) as cofactor. In terms of processing, undergoes a tyrosination/detyrosination cycle, the cyclic removal and re-addition of a C-terminal tyrosine residue by the enzymes tubulin tyrosine carboxypeptidase (TTCP) and tubulin tyrosine ligase (TTL), respectively.

The protein resides in the cytoplasm. The protein localises to the cytoskeleton. It carries out the reaction GTP + H2O = GDP + phosphate + H(+). In terms of biological role, tubulin is the major constituent of microtubules, a cylinder consisting of laterally associated linear protofilaments composed of alpha- and beta-tubulin heterodimers. Microtubules grow by the addition of GTP-tubulin dimers to the microtubule end, where a stabilizing cap forms. Below the cap, tubulin dimers are in GDP-bound state, owing to GTPase activity of alpha-tubulin. The sequence is that of Tubulin alpha-1 chain (TUBA1) from Arabidopsis thaliana (Mouse-ear cress).